The following is a 217-amino-acid chain: MNIGIIVFPGSNCDRDVRWATEGCLGVPTSFLWHETTDLDGFDAIVIPGGFSYGDYLRCGAIARFAPVLNSLISFVDKGGKVLGICNGFQILTELGLLQGALTRNKNLHFICDRANLSIESTKSTWMKNYKKHDSISLPIAHGEGRYQCSSDVLKKLQDDDSVALRYADNPNGSIHDIAGITNKKGNVLGMMPHPERACDDALGDIDGKSILSTLLS.

The Glutamine amidotransferase type-1 domain occupies 2–217; it reads NIGIIVFPGS…GKSILSTLLS (216 aa). Catalysis depends on Cys86, which acts as the Nucleophile. Active-site residues include His194 and Glu196.

As to quaternary structure, part of the FGAM synthase complex composed of 1 PurL, 1 PurQ and 2 PurS subunits.

Its subcellular location is the cytoplasm. It catalyses the reaction N(2)-formyl-N(1)-(5-phospho-beta-D-ribosyl)glycinamide + L-glutamine + ATP + H2O = 2-formamido-N(1)-(5-O-phospho-beta-D-ribosyl)acetamidine + L-glutamate + ADP + phosphate + H(+). The catalysed reaction is L-glutamine + H2O = L-glutamate + NH4(+). It participates in purine metabolism; IMP biosynthesis via de novo pathway; 5-amino-1-(5-phospho-D-ribosyl)imidazole from N(2)-formyl-N(1)-(5-phospho-D-ribosyl)glycinamide: step 1/2. In terms of biological role, part of the phosphoribosylformylglycinamidine synthase complex involved in the purines biosynthetic pathway. Catalyzes the ATP-dependent conversion of formylglycinamide ribonucleotide (FGAR) and glutamine to yield formylglycinamidine ribonucleotide (FGAM) and glutamate. The FGAM synthase complex is composed of three subunits. PurQ produces an ammonia molecule by converting glutamine to glutamate. PurL transfers the ammonia molecule to FGAR to form FGAM in an ATP-dependent manner. PurS interacts with PurQ and PurL and is thought to assist in the transfer of the ammonia molecule from PurQ to PurL. The chain is Phosphoribosylformylglycinamidine synthase subunit PurQ from Prochlorococcus marinus (strain NATL2A).